Consider the following 401-residue polypeptide: MVVSVKVFKKATPNGKVTFYLGRRDFIDHIDYCDPVDGVIVVEPDYLKNRKVFGQLATTYRYGREEDEVMGVKFSKELILCREQIVPMTNPNMEMTPMQEKLVRKLGSNAYPFTFHFPPNSPSSVTLQQEGDDNGKPLGVEYTIRAFVGDSEDDRQHKRSMVSLVIKKLQYAPLNRGQRLPSSLVSKGFTFSNGKISLEVTLDREIYYHGEKTAATVQVSNNSKKSVKSIKCFIVQHTEITMVNAQFSKHVAQLETKEGCPITPGANLTKTFYLIPLAANNKDRHGIALDGHLKDEDVNLASSTMVQEGKSTGDACGIVISYSVRIKLNCGTLGGEMQTDVPFKLLQPAPGTIEKKRSNAMKKMKSIEQHRNVKGYYQDDDDNIVFEDFAKMRMNNVNMAD.

Residue serine 366 is modified to Phosphoserine; by CaMK.

Belongs to the arrestin family. In terms of processing, phosphorylated upon light exposure. In terms of tissue distribution, expressed in photoreceptor cells.

The protein resides in the cell projection. The protein localises to the rhabdomere. Regulates photoreceptor cell deactivation. Arr1 and Arr2 proteins are mediators of rhodopsin inactivation and are essential for the termination of the phototransduction cascade. Involved in regulating normal cycles of per nuclear accumulation in brain circadian neurons and thus is important for normal circadian behavior. In the dark, functions with Arr1 to promote the formation of cytosolic Bdbt foci, which are required for dco localization to photoreceptor nuclei where it phosphorylates and activates degradation of per. The polypeptide is Phosrestin-1 (Arr2) (Drosophila melanogaster (Fruit fly)).